We begin with the raw amino-acid sequence, 566 residues long: Medium-chain fatty-acid--CoA ligase (566 aa).

ATP is bound at residue 231–242; the sequence is ILASERAYCARL.

It belongs to the ATP-dependent AMP-binding enzyme family. As to quaternary structure, homodimer. It depends on Mg(2+) as a cofactor.

Its subcellular location is the cell membrane. The catalysed reaction is hexanoate + ATP + CoA = hexanoyl-CoA + AMP + diphosphate. The enzyme catalyses octanoate + ATP + CoA = octanoyl-CoA + AMP + diphosphate. It catalyses the reaction dodecanoate + ATP + CoA = dodecanoyl-CoA + AMP + diphosphate. It participates in lipid metabolism; fatty acid beta-oxidation. Its function is as follows. Catalyzes the esterification, concomitant with transport, of exogenous fatty acids into metabolically active CoA thioesters for subsequent degradation or incorporation into phospholipids. Is maximally active on C6:0, C8:0 and C12:0 fatty acids, while has a low activity on C14-C18 chain length fatty acids. Is involved in the anaerobic beta-oxidative degradation of fatty acids, which allows anaerobic growth of E.coli on fatty acids as a sole carbon and energy source in the presence of nitrate or fumarate as a terminal electron acceptor. Can functionally replace FadD under anaerobic conditions. The sequence is that of Medium-chain fatty-acid--CoA ligase from Escherichia coli (strain K12).